The primary structure comprises 130 residues: Ribonuclease P protein component (130 aa).

Belongs to the RnpA family. As to quaternary structure, consists of a catalytic RNA component (M1 or rnpB) and a protein subunit.

The enzyme catalyses Endonucleolytic cleavage of RNA, removing 5'-extranucleotides from tRNA precursor.. Its function is as follows. RNaseP catalyzes the removal of the 5'-leader sequence from pre-tRNA to produce the mature 5'-terminus. It can also cleave other RNA substrates such as 4.5S RNA. The protein component plays an auxiliary but essential role in vivo by binding to the 5'-leader sequence and broadening the substrate specificity of the ribozyme. The sequence is that of Ribonuclease P protein component from Desulfovibrio desulfuricans (strain ATCC 27774 / DSM 6949 / MB).